Here is a 476-residue protein sequence, read N- to C-terminus: NADH-quinone oxidoreductase subunit N (476 aa).

14 helical membrane passes run 5-25 (LALI…LMLG), 38-58 (LSAL…FGVE), 70-90 (AFGG…ILVA), 97-117 (GMRA…GIMA), 122-142 (LMTL…LASF), 157-177 (FVLG…LYGF), 196-218 (IGLI…AVPF), 231-253 (TPVT…ARIV), 264-284 (WQQI…VGAI), 292-312 (LLAY…AAGT), 318-338 (GVLT…LVVL), 364-384 (LAAA…LFGF), 401-421 (PLAV…IAII), and 445-465 (IVAA…PALA).

The protein belongs to the complex I subunit 2 family. As to quaternary structure, NDH-1 is composed of 14 different subunits. Subunits NuoA, H, J, K, L, M, N constitute the membrane sector of the complex.

It localises to the cell inner membrane. It catalyses the reaction a quinone + NADH + 5 H(+)(in) = a quinol + NAD(+) + 4 H(+)(out). Functionally, NDH-1 shuttles electrons from NADH, via FMN and iron-sulfur (Fe-S) centers, to quinones in the respiratory chain. The immediate electron acceptor for the enzyme in this species is believed to be ubiquinone. Couples the redox reaction to proton translocation (for every two electrons transferred, four hydrogen ions are translocated across the cytoplasmic membrane), and thus conserves the redox energy in a proton gradient. The polypeptide is NADH-quinone oxidoreductase subunit N (Sphingopyxis alaskensis (strain DSM 13593 / LMG 18877 / RB2256) (Sphingomonas alaskensis)).